The chain runs to 205 residues: Meiotic nuclear division protein 1 homolog (205 aa).

Serine 2 carries the post-translational modification N-acetylserine. Positions 83–173 (KRKLEVLDSQ…EAANRWTDNI (91 aa)) form a coiled coil.

The protein belongs to the MND1 family. Heterodimer with PSMC3IP/HOP2. MND1-PSMC3IP interacts with DMC1 and RAD51 and binds preferentially to dsDNA.

The protein localises to the nucleus. Functionally, required for proper homologous chromosome pairing and efficient cross-over and intragenic recombination during meiosis. Stimulates both DMC1- and RAD51-mediated homologous strand assimilation, which is required for the resolution of meiotic double-strand breaks. The sequence is that of Meiotic nuclear division protein 1 homolog from Bos taurus (Bovine).